A 43-amino-acid polypeptide reads, in one-letter code: Protein PsbN (43 aa).

A helical transmembrane segment spans residues 5-27 (TLVAIFISCSLVSFTGYALYTAF).

This sequence belongs to the PsbN family.

It is found in the plastid. Its subcellular location is the chloroplast thylakoid membrane. In terms of biological role, may play a role in photosystem I and II biogenesis. This is Protein PsbN from Exsertotheca crispa (Moss).